Reading from the N-terminus, the 74-residue chain is Lantibiotic lichenicidin A1 (74 aa).

A propeptide spanning residues 1–42 is cleaved from the precursor; it reads MSKKEMILSWKNPMYRTESSYHPAGNILKELQEEEQHSIAGG. T43 carries the post-translational modification 2-oxobutanoic acid. The segment at residues 45–49 is a cross-link (beta-methyllanthionine (Thr-Cys)); sequence TLSTC. S47 is modified (2,3-didehydroalanine (Ser)). The residue at position 48 (T48) is a (Z)-2,3-didehydrobutyrine. The lanthionine (Ser-Cys) cross-link spans 53–63; sequence SKPLGNNGYLC. Cross-links (beta-methyllanthionine (Thr-Cys)) lie at residues 64–69 and 66–73; these read TVTKEC and TKECMPSC.

Post-translationally, maturation of lantibiotics involves the enzymatic conversion of Thr, and Ser into dehydrated AA and the formation of thioether bonds with cysteine. This is followed by membrane translocation and cleavage of the modified precursor.

It is found in the secreted. The protein resides in the cell wall. Its function is as follows. Lanthionine-containing peptide antibiotic (lantibiotic) active on Gram-positive bacteria. The bactericidal activity of lantibiotics is based on depolarization of energized bacterial cytoplasmic membranes, initiated by the formation of aqueous transmembrane pores. When present individually, LchA1 exhibits activity towards L.lactis HP. When combined with LchA2, it displays activity towards a broad spectrum of non-pathogenic and pathogenic Gram-positive bacteria including strains of L.monocytogenes, methicillin-resistant S.aureus, S.pneumoniae and strains of vancomycin-resistant enterococci, but not towards E.faecium L4001 and BM4147-1. Combined LchA1 and LchA2 peptides also inhibit Bacillus sp. HIL-Y85/54728, L.lactis DPC3417 and B.halodurans C-125, which produce lantibiotics themselves. Inactivated by proteinase K and pronase E, but not by trypsin and chymotrypsin. This chain is Lantibiotic lichenicidin A1, found in Bacillus licheniformis (strain ATCC 14580 / DSM 13 / JCM 2505 / CCUG 7422 / NBRC 12200 / NCIMB 9375 / NCTC 10341 / NRRL NRS-1264 / Gibson 46).